Here is a 765-residue protein sequence, read N- to C-terminus: MAKKHRYTTVQRKQERQKEEEYIKELEQRIQDYDVKNNKAVFFKDLPISKSTLKGLNEASFIKMTDIQRDSIVTSLQGHDVFGTAKTGSGKTLAFLVPVLEKLYRERWTEFDGLGALIISPTRELAMQIYEVLVKIGSHTQFSAGLVIGGKDVNFELERIAKINILIGTPGRILQHMDQAVGLNTSNLQMLVLDEADRCLDMGFQKTLDAIVGNLPPDRQTLLFSATQSQSISDLARLSLTDYKKIGTIDSSEDGPATPKTLQQSYIIADLADKLDVLYSFIKSHLKTKMIVFFSSSKQVHFVYETFRKMQPGISLLHLHGRQKQRARTETLDKFFRAQQVCLFATDVVARGIDFPAVDWVIQVDCPEDVDTYIHRVGRAARYGKKGRSLIILTPQEEAFLTRMAAKKIEPGKLTIKQSKKKSIKPQLQSLLFKDPELKYLGQKAFISYVKSIYIQKDKEVFKFDELPTEEFANSLGLPGAPRIKIKGMKAIEQAKKLKNTSRSLLSLSKANDDGEINDKKDKQVRTKYDKMFERKNQTILSEHYLNITKSQAQEDEDEDFITVKRKDHELKEEDLPQLTVPTSRRAQKKALSKKASLSTKGNATKMVFDDEGQAHPVYELEGEEEFHKKGDAEEQKKEFLSKEAEIMADRDVSDKIIQKEKKQEKKRKRLEAMRREMEAAYADEYSDEDEEGGNVAYLGTGNLSDDMEEYSSDEESRKTKKSKTVDYRFDKKNKTISEDTDIMEIQEPETIEDLESLTARLIEG.

The short motif at 41 to 69 (VFFKDLPISKSTLKGLNEASFIKMTDIQR) is the Q motif element. The Helicase ATP-binding domain maps to 72–246 (IVTSLQGHDV…RLSLTDYKKI (175 aa)). Residue 85–92 (AKTGSGKT) coordinates ATP. Positions 194–197 (DEAD) match the DEAD box motif. The Helicase C-terminal domain maps to 274-432 (KLDVLYSFIK…SIKPQLQSLL (159 aa)). Disordered regions lie at residues 575 to 615 (DLPQ…EGQA) and 682 to 725 (YADE…KSKT).

The protein belongs to the DEAD box helicase family. DDX10/DBP4 subfamily. In terms of assembly, interacts with the U3 and U14 snoRNAs. Associates with pre-ribosomal complexes.

The protein resides in the nucleus. Its subcellular location is the nucleolus. It catalyses the reaction ATP + H2O = ADP + phosphate + H(+). In terms of biological role, ATP-dependent RNA helicase required for ribosome biogenesis. Involved in the release of U14 snoRNA in pre-ribosomal complexes. Required for pre-rRNA cleavage at site A2. This Candida glabrata (strain ATCC 2001 / BCRC 20586 / JCM 3761 / NBRC 0622 / NRRL Y-65 / CBS 138) (Yeast) protein is ATP-dependent RNA helicase DBP4 (DBP4).